We begin with the raw amino-acid sequence, 893 residues long: Flippase kinase 1 (893 aa).

Residues 1–23 (MAGHHHEHEQERDHEQEHEHDSL) are compositionally biased toward basic and acidic residues. 3 disordered regions span residues 1-124 (MAGH…SSKL), 129-148 (PMTSVANASPASPPLSPTIP), and 163-243 (QHEH…ERAG). A compositionally biased stretch (polar residues) spans 24-42 (QRPTTGSERTRSISFSKLL). Low complexity predominate over residues 49–62 (NASSSNNMSVSSVN). Positions 76-87 (NNSGSEGQSSRF) are enriched in polar residues. Over residues 96 to 122 (SGNSSKNASAHNSSQSSLEGDSASSSS) the composition is skewed to low complexity. A phosphoserine mark is found at Ser140, Ser144, Ser171, Ser175, and Ser185. Low complexity predominate over residues 206 to 216 (SQNSNNSSSTS). Polar residues predominate over residues 228–237 (GSQGFSSNNP). Ser300 bears the Phosphoserine mark. Over residues 334-355 (DTLNGSPSRGSSKSPTITQTFP) the composition is skewed to polar residues. Positions 334-480 (DTLNGSPSRG…PRRSRRLRTK (147 aa)) are disordered. Over residues 370–380 (NNDKHDEKEEQ) the composition is skewed to basic and acidic residues. Polar residues predominate over residues 381 to 399 (QTTTDNKTRNLSPTKQNGK). Ser414 is modified (phosphoserine). Residues 422–439 (ASATSPTSSSARKTSGSS) show a composition bias toward low complexity. Ser462 bears the Phosphoserine mark. Positions 496-777 (FEKIRLLGQG…AADVKKHPFF (282 aa)) constitute a Protein kinase domain. Residues 502-510 (LGQGDVGKV) and Lys525 contribute to the ATP site. Catalysis depends on Asp621, which acts as the Proton acceptor. Positions 778–861 (KKVQWSLLRN…MSLMEQDNNS (84 aa)) constitute an AGC-kinase C-terminal domain. The interval 874–893 (AYTPNSNRSRSNSHRTFFKR) is disordered. The span at 884 to 893 (SNSHRTFFKR) shows a compositional bias: basic residues.

Belongs to the protein kinase superfamily. Ser/Thr protein kinase family. KIN82 subfamily. In terms of processing, the N-terminal non-catalytic domain is phosphorylated by YPK1.

The protein resides in the cytoplasm. Its subcellular location is the cell membrane. The enzyme catalyses L-seryl-[protein] + ATP = O-phospho-L-seryl-[protein] + ADP + H(+). It catalyses the reaction L-threonyl-[protein] + ATP = O-phospho-L-threonyl-[protein] + ADP + H(+). Its activity is regulated as follows. Down-regulated by YKP1 phosphorylation. This effect is counteracted in the presence of mannosyl-inositolphosphorylceramide (MIPC). In terms of biological role, flippase activator that phosphorylates DNF1 and DNF2 and which is involved in the generation of phospholipid asymmetry in membranes by the inward translocation of phospholipids and in the retrieval pathway from early endosomes to the trans-Golgi network (TGN). Also phosphorylates the N-terminal half of YPK1. Involved in pheromone-response. This chain is Flippase kinase 1 (FPK1), found in Saccharomyces cerevisiae (strain ATCC 204508 / S288c) (Baker's yeast).